The sequence spans 729 residues: Sodium-dependent neutral amino acid transporter B(0)AT2 (729 aa).

Topologically, residues 1 to 69 are cytoplasmic; sequence MPKNSKVVKR…ARPAWNSKLQ (69 aa). 2 positions are modified to phosphoserine: Ser25 and Ser55. 3 helical membrane-spanning segments follow: residues 70 to 90, 98 to 117, and 142 to 162; these read YILA…FPYL, AYLL…LFFL, and GIGF…NVII. The Extracellular portion of the chain corresponds to 163–225; that stretch reads GWSLFYFSQS…TSISESGGLN (63 aa). Asn187 and Asn213 each carry an N-linked (GlcNAc...) asparagine glycan. Helical transmembrane passes span 226–244, 253–270, 306–323, and 335–356; these read WKMT…LAMI, IMYF…CFLI, VFFA…FSSY, and VLVS…FAVL. Over 357 to 452 the chain is Extracellular; that stretch reads GFKANVINEK…FIAFTEAMTH (96 aa). N-linked (GlcNAc...) asparagine glycosylation is found at Asn383 and Asn394. Transmembrane regions (helical) follow at residues 453–472, 496–514, 530–550, 571–592, and 620–642; these read FPAS…NLGL, ILTV…IFVQ, TLPL…VYGI, YMWK…IVNM, and VICI…IRRC. Residues 643 to 729 lie on the Cytoplasmic side of the membrane; that stretch reads NLIDDSSGNL…DMPDMPESDL (87 aa). Residues Ser687, Ser699, and Ser701 each carry the phosphoserine modification.

Belongs to the sodium:neurotransmitter symporter (SNF) (TC 2.A.22) family. SLC6A15 subfamily.

Its subcellular location is the membrane. The enzyme catalyses L-leucine(in) + Na(+)(in) = L-leucine(out) + Na(+)(out). It carries out the reaction L-isoleucine(in) + Na(+)(in) = L-isoleucine(out) + Na(+)(out). The catalysed reaction is L-methionine(in) + Na(+)(in) = L-methionine(out) + Na(+)(out). It catalyses the reaction L-proline(in) + Na(+)(in) = L-proline(out) + Na(+)(out). The enzyme catalyses L-alanine(in) + Na(+)(in) = L-alanine(out) + Na(+)(out). It carries out the reaction L-asparagine(in) + Na(+)(in) = L-asparagine(out) + Na(+)(out). The catalysed reaction is L-valine(in) + Na(+)(in) = L-valine(out) + Na(+)(out). It catalyses the reaction L-cysteine(in) + Na(+)(in) = L-cysteine(out) + Na(+)(out). The enzyme catalyses L-glutamine(in) + Na(+)(in) = L-glutamine(out) + Na(+)(out). It carries out the reaction L-serine(in) + Na(+)(in) = L-serine(out) + Na(+)(out). The catalysed reaction is L-threonine(in) + Na(+)(in) = L-threonine(out) + Na(+)(out). It catalyses the reaction L-pipecolate(in) + Na(+)(in) = L-pipecolate(out) + Na(+)(out). The enzyme catalyses L-phenylalanine(in) + Na(+)(in) = L-phenylalanine(out) + Na(+)(out). Its function is as follows. Functions as a sodium-dependent neutral amino acid transporter. Exhibits preference for the branched-chain amino acids, particularly leucine, valine and isoleucine and methionine. Can also transport low-affinity substrates such as alanine, phenylalanine, glutamine and pipecolic acid. Mediates the saturable, pH-sensitive and electrogenic cotransport of proline and sodium ions with a stoichiometry of 1:1. May have a role as transporter for neurotransmitter precursors into neurons. In contrast to other members of the neurotransmitter transporter family, does not appear to be chloride-dependent. In Bos taurus (Bovine), this protein is Sodium-dependent neutral amino acid transporter B(0)AT2 (SLC6A15).